The following is a 504-amino-acid chain: Maturase K (504 aa).

Belongs to the intron maturase 2 family. MatK subfamily.

The protein localises to the plastid. The protein resides in the chloroplast. Its function is as follows. Usually encoded in the trnK tRNA gene intron. Probably assists in splicing its own and other chloroplast group II introns. In Simmondsia chinensis (Jojoba), this protein is Maturase K.